The primary structure comprises 427 residues: UPF0597 protein FN1147 (427 aa).

The protein belongs to the UPF0597 family.

This chain is UPF0597 protein FN1147, found in Fusobacterium nucleatum subsp. nucleatum (strain ATCC 25586 / DSM 15643 / BCRC 10681 / CIP 101130 / JCM 8532 / KCTC 2640 / LMG 13131 / VPI 4355).